Here is a 307-residue protein sequence, read N- to C-terminus: Ornithine carbamoyltransferase (307 aa).

Residues 53–56, Q80, R104, and 131–134 contribute to the carbamoyl phosphate site; these read STRT and HPCQ. L-ornithine contacts are provided by residues N162, D220, and 224-225; that span reads SM. Residues 260–261 and R288 contribute to the carbamoyl phosphate site; that span reads CL.

The protein belongs to the aspartate/ornithine carbamoyltransferase superfamily. OTCase family.

The protein localises to the cytoplasm. It carries out the reaction carbamoyl phosphate + L-ornithine = L-citrulline + phosphate + H(+). Its pathway is amino-acid biosynthesis; L-arginine biosynthesis; L-arginine from L-ornithine and carbamoyl phosphate: step 1/3. Functionally, reversibly catalyzes the transfer of the carbamoyl group from carbamoyl phosphate (CP) to the N(epsilon) atom of ornithine (ORN) to produce L-citrulline. The sequence is that of Ornithine carbamoyltransferase from Nitrosomonas europaea (strain ATCC 19718 / CIP 103999 / KCTC 2705 / NBRC 14298).